The chain runs to 413 residues: Na(+)-translocating NADH-quinone reductase subunit B (413 aa).

The next 3 helical transmembrane spans lie at 55–75 (IMIMVWFAVFPAMFWGMYNAG), 128–148 (FLPIYATVFIVGGFWEVLFCM), and 163–183 (ILFALIVPPTLPLWQAALGIT). Position 235 is an FMN phosphoryl threonine (Thr-235). A run of 5 helical transmembrane segments spans residues 267-287 (IPGSIGEVSTLALMIGAAMIV), 296-316 (IIAGVMIGMIAVSTLFNVIGS), 324-344 (MPWHWHLVLGGFAFGMFFMAT), 357-377 (WWYGILIGAMCVMIRVVNPAY), and 380-400 (GMMLAILFANLFAPLFDHVVI).

This sequence belongs to the NqrB/RnfD family. In terms of assembly, composed of six subunits; NqrA, NqrB, NqrC, NqrD, NqrE and NqrF. FMN serves as cofactor.

The protein resides in the cell inner membrane. The catalysed reaction is a ubiquinone + n Na(+)(in) + NADH + H(+) = a ubiquinol + n Na(+)(out) + NAD(+). In terms of biological role, NQR complex catalyzes the reduction of ubiquinone-1 to ubiquinol by two successive reactions, coupled with the transport of Na(+) ions from the cytoplasm to the periplasm. NqrA to NqrE are probably involved in the second step, the conversion of ubisemiquinone to ubiquinol. In Vibrio campbellii (strain ATCC BAA-1116), this protein is Na(+)-translocating NADH-quinone reductase subunit B.